A 691-amino-acid polypeptide reads, in one-letter code: Elongation factor G (691 aa).

The region spanning 8 to 283 (KKVRNIGIAA…AVVAYLPAPD (276 aa)) is the tr-type G domain. GTP contacts are provided by residues 17–24 (AHIDAGKT), 81–85 (DTPGH), and 135–138 (NKMD).

This sequence belongs to the TRAFAC class translation factor GTPase superfamily. Classic translation factor GTPase family. EF-G/EF-2 subfamily.

The protein resides in the cytoplasm. Catalyzes the GTP-dependent ribosomal translocation step during translation elongation. During this step, the ribosome changes from the pre-translocational (PRE) to the post-translocational (POST) state as the newly formed A-site-bound peptidyl-tRNA and P-site-bound deacylated tRNA move to the P and E sites, respectively. Catalyzes the coordinated movement of the two tRNA molecules, the mRNA and conformational changes in the ribosome. This chain is Elongation factor G, found in Campylobacter jejuni subsp. jejuni serotype O:23/36 (strain 81-176).